The sequence spans 481 residues: G-protein coupled receptor 37-like 1 (481 aa).

A signal peptide spans 1-24 (MRWLWPLAVSLAVVLAVGPSEVSG). At 25–134 (AATLSLGGHR…ESSYSAYAVM (110 aa)) the chain is on the extracellular side. 2 disordered regions span residues 30–55 (LGGH…GPKE) and 76–107 (LQPT…TNLT). Residues 95-107 (TSESGQELRTNLT) show a composition bias toward polar residues. Residue Asn-105 is glycosylated (N-linked (GlcNAc...) asparagine). The chain crosses the membrane as a helical span at residues 135-155 (LLALVVFAVGIVGNLSVMCIV). Residues 156–167 (WHSYYLKSAWNS) lie on the Cytoplasmic side of the membrane. The helical transmembrane segment at 168–188 (ILASLALWDFLVLFFCLPIVI) threads the bilayer. Residues 189 to 205 (FNEITKQRLLGDVSCRA) lie on the Extracellular side of the membrane. A disulfide bridge connects residues Cys-203 and Cys-286. A helical membrane pass occupies residues 206 to 226 (VPFMEVSSLGVTTFSLCALGI). At 227–251 (DRFHVATSTLPKVRPIERCQSILAK) the chain is on the cytoplasmic side. A helical transmembrane segment spans residues 252–272 (LAVIWVGSMMLAVPELLLWQL). At 273–310 (AQEPTPTMGTVDSCIMKPSADLPESLYSLVMTYQNARM) the chain is on the extracellular side. The chain crosses the membrane as a helical span at residues 311 to 331 (WWYFGCYFCLPILFTVTCQLV). The Cytoplasmic portion of the chain corresponds to 332–360 (TWRVRGPPGRKPECRAGRHEQCESQLNST). The helical transmembrane segment at 361–381 (VVGLTVVYAFCTLPENICNIV) threads the bilayer. Residues 382 to 398 (VAYLSTELTRQTLDLLG) are Extracellular-facing. Residues 399–419 (LINQFSTFFKGAITPVLLLCI) traverse the membrane as a helical segment. Residues 420–481 (CRPLGQAFLD…PPLLPLGTPC (62 aa)) lie on the Cytoplasmic side of the membrane. Position 471 is a phosphoserine (Ser-471). Phosphothreonine is present on Thr-479.

The protein belongs to the G-protein coupled receptor 1 family. As to quaternary structure, interacts with the PTCH1 receptor. Undergoes metalloprotease-mediated cleavage which reduces its constitutive activity. In terms of processing, ubiquitinated. In terms of tissue distribution, highly expressed in brain.

The protein resides in the cell membrane. It is found in the cell projection. The protein localises to the cilium membrane. Its function is as follows. G-protein coupled receptor. Has been shown to bind the neuroprotective and glioprotective factor prosaposin (PSAP), leading to endocytosis followed by an ERK phosphorylation cascade. However, other studies have shown that prosaposin does not increase activity. It has been suggested that GPR37L1 is a constitutively active receptor which signals through the guanine nucleotide-binding protein G(s) subunit alpha. Participates in the regulation of postnatal cerebellar development by modulating the Shh pathway. Regulates baseline blood pressure in females and protects against cardiovascular stress in males. Mediates inhibition of astrocyte glutamate transporters and reduction in neuronal N-methyl-D-aspartate receptor activity. The sequence is that of G-protein coupled receptor 37-like 1 (Gpr37l1) from Rattus norvegicus (Rat).